The following is a 401-amino-acid chain: ADP-forming sulfoacetate-CoA ligase subunit SqwK (401 aa).

Positions 9–217 (KTVFSEHKIP…DNSVFRQPRF (209 aa)) constitute an ATP-grasp domain. 35-96 (KSVGFPSVVK…EEAVHIDKEI (62 aa)) is a binding site for ATP. E185 and N187 together coordinate Mg(2+).

Belongs to the succinate/malate CoA ligase beta subunit family. Forms a complex with SqwL. Requires Mg(2+) as cofactor.

The catalysed reaction is sulfoacetate + ATP + CoA = sulfoacetyl-CoA + ADP + phosphate. Part of a variant of the sulfo-TK pathway, a D-sulfoquinovose degradation pathway that produces sulfoacetate. Hydrolyzes sulfoacetyl-coenzyme A (sulfoacetyl-CoA) to produce sulfoacetate and CoA coupled with the phosphorylation of ADP to generate ATP. Cannot use succinate, acetate or 3-hydroxypropionate, and shows only residual activities with malonate and 3-sulfopropanoate. In Acholeplasma sp, this protein is ADP-forming sulfoacetate-CoA ligase subunit SqwK.